Here is a 428-residue protein sequence, read N- to C-terminus: Ribosome biogenesis protein WDR12 homolog (428 aa).

The tract at residues 13 to 97 (LQVHFTTKQK…EDTIELEYVE (85 aa)) is ubiquitin-like (UBL) domain. WD repeat units follow at residues 109-146 (LHDD…KLTI), 148-190 (GHVA…NTAE), 197-236 (GHER…DKGE), 259-297 (GHRE…IKTE), 299-338 (TGNK…GNFV), 344-384 (GHSQ…APIF), and 388-426 (GHED…DNTK).

The protein belongs to the WD repeat WDR12/YTM1 family.

The protein localises to the nucleus. It is found in the nucleolus. The protein resides in the nucleoplasm. In terms of biological role, required for maturation of ribosomal RNAs and formation of the large ribosomal subunit. The polypeptide is Ribosome biogenesis protein WDR12 homolog (Anopheles gambiae (African malaria mosquito)).